The primary structure comprises 248 residues: tRNA (guanine-N(1)-)-methyltransferase (248 aa).

S-adenosyl-L-methionine is bound by residues G113 and 133 to 138 (VGDYVL).

It belongs to the RNA methyltransferase TrmD family. Homodimer.

The protein resides in the cytoplasm. It carries out the reaction guanosine(37) in tRNA + S-adenosyl-L-methionine = N(1)-methylguanosine(37) in tRNA + S-adenosyl-L-homocysteine + H(+). In terms of biological role, specifically methylates guanosine-37 in various tRNAs. The polypeptide is tRNA (guanine-N(1)-)-methyltransferase (Shewanella sp. (strain ANA-3)).